A 361-amino-acid chain; its full sequence is KDEL-tailed cysteine endopeptidase CEP2 (361 aa).

A signal peptide spans M1–G20. The propeptide at F21–K127 is activation peptide. N75 and N124 each carry an N-linked (GlcNAc...) asparagine glycan. Disulfide bonds link C149–C191, C183–C224, and C282–C333. C152 is an active-site residue. Active-site residues include H288 and N308. The short motif at K358–L361 is the Prevents secretion from ER element.

Belongs to the peptidase C1 family. As to expression, expressed in roots, stems, rosette and cauline leaves, flowers, buds and green siliques. Found in the tip of young primary leaves, in very young root tips and at later stages in all tissues of lateral root, including the vascular bundle. Not expressed in lateral root primordia, while directly emerging through the epidermis.

Its subcellular location is the endoplasmic reticulum. Its function is as follows. Involved in the final stage of developmental programmed cell death and in intercalation of new cells. Cleaves extensins, thus probably supporting the final cell collapse. In Arabidopsis thaliana (Mouse-ear cress), this protein is KDEL-tailed cysteine endopeptidase CEP2.